A 557-amino-acid polypeptide reads, in one-letter code: Probable protein kinase UbiB (557 aa).

The region spanning 121–509 (AFDTTPLASA…RKLQTRVVTA (389 aa)) is the Protein kinase domain. Residues 127–135 (LASASIAQV) and K154 contribute to the ATP site. D289 serves as the catalytic Proton acceptor. The next 2 helical transmembrane spans lie at 506-526 (VVTA…YGLH) and 535-555 (VPVW…IAWL).

It belongs to the ABC1 family. UbiB subfamily.

The protein resides in the cell inner membrane. The protein operates within cofactor biosynthesis; ubiquinone biosynthesis [regulation]. In terms of biological role, is probably a protein kinase regulator of UbiI activity which is involved in aerobic coenzyme Q (ubiquinone) biosynthesis. This Xanthomonas campestris pv. campestris (strain B100) protein is Probable protein kinase UbiB.